We begin with the raw amino-acid sequence, 428 residues long: Cysteine--tRNA ligase (428 aa).

Residue Cys-23 participates in Zn(2+) binding. Positions 25–35 (PTVYNDLHLGN) match the 'HIGH' region motif. 3 residues coordinate Zn(2+): Cys-196, His-221, and Glu-225. The short motif at 253–257 (KMSKS) is the 'KMSKS' region element. Lys-256 is an ATP binding site.

This sequence belongs to the class-I aminoacyl-tRNA synthetase family. In terms of assembly, monomer. The cofactor is Zn(2+).

The protein localises to the cytoplasm. It carries out the reaction tRNA(Cys) + L-cysteine + ATP = L-cysteinyl-tRNA(Cys) + AMP + diphosphate. This Mycoplasma genitalium (strain ATCC 33530 / DSM 19775 / NCTC 10195 / G37) (Mycoplasmoides genitalium) protein is Cysteine--tRNA ligase (cysS).